A 476-amino-acid chain; its full sequence is Adenosylhomocysteinase (476 aa).

Residues T67, D142, and E202 each contribute to the substrate site. NAD(+) is bound at residue 203-205 (TTT). Residues K232 and D236 each contribute to the substrate site. NAD(+)-binding positions include N237, 266-271 (GYGDVG), E289, N324, 345-347 (IGH), and N390.

Belongs to the adenosylhomocysteinase family. NAD(+) is required as a cofactor.

The protein resides in the cytoplasm. The enzyme catalyses S-adenosyl-L-homocysteine + H2O = L-homocysteine + adenosine. Its pathway is amino-acid biosynthesis; L-homocysteine biosynthesis; L-homocysteine from S-adenosyl-L-homocysteine: step 1/1. May play a key role in the regulation of the intracellular concentration of adenosylhomocysteine. This chain is Adenosylhomocysteinase, found in Prochlorococcus marinus (strain MIT 9313).